A 795-amino-acid polypeptide reads, in one-letter code: Phenylalanine--tRNA ligase beta subunit (795 aa).

The tRNA-binding domain maps to 39 to 148; sequence AGSFHGVVVG…ADAPIGTDIR (110 aa). One can recognise a B5 domain in the interval 401 to 476; the sequence is PKRATITLRR…RVYGYNNIPD (76 aa). Asp-454, Asp-460, Glu-463, and Glu-464 together coordinate Mg(2+). The FDX-ACB domain maps to 701-794; sequence SRFPANRRDI…LKERFQASLR (94 aa).

This sequence belongs to the phenylalanyl-tRNA synthetase beta subunit family. Type 1 subfamily. As to quaternary structure, tetramer of two alpha and two beta subunits. The cofactor is Mg(2+).

The protein localises to the cytoplasm. The enzyme catalyses tRNA(Phe) + L-phenylalanine + ATP = L-phenylalanyl-tRNA(Phe) + AMP + diphosphate + H(+). The protein is Phenylalanine--tRNA ligase beta subunit (pheT) of Escherichia coli (strain K12).